Reading from the N-terminus, the 925-residue chain is GPI ethanolamine phosphate transferase 1 (925 aa).

Over 1–6 (MWNKHR) the chain is Cytoplasmic. The helical transmembrane segment at 7 to 27 (LAFILVGLLFHLFYLRSIFDI) threads the bilayer. Residues 28–457 (YFVSPLVHGM…TTYNWRFIRS (430 aa)) are Lumenal-facing. N-linked (GlcNAc...) asparagine glycosylation is found at asparagine 90, asparagine 138, asparagine 198, asparagine 286, asparagine 312, and asparagine 358. A helical membrane pass occupies residues 458 to 478 (IVTLGFIGWITYSFTIFLRLF). Over 479-492 (ILEKQYAMKTSPQN) the chain is Cytoplasmic. Residues 493–510 (LASFGALTAALNYVLYYQ) form a helical membrane-spanning segment. Residues 511-516 (RSPFNY) lie on the Lumenal side of the membrane. The helical transmembrane segment at 517–537 (YMYLLFPLFFWSQILTNSTIL) threads the bilayer. Residues 538–547 (HDGIREMFKG) lie on the Cytoplasmic side of the membrane. A helical transmembrane segment spans residues 548 to 568 (VSMLQRIGICALIVSIYEGIV). Residues 569–574 (YGYFDR) lie on the Lumenal side of the membrane. Residues 575 to 595 (WIFTIIFNLLALYPFFCGIKD) traverse the membrane as a helical segment. At 596-599 (AKTN) the chain is on the cytoplasmic side. A helical transmembrane segment spans residues 600-620 (MFWGANSMALSIFTLFDAVKI). Glutamate 621 is a topological domain (lumenal). Residues 622–642 (SLTQINVSGLLLVASGLYALW) form a helical membrane-spanning segment. Topologically, residues 643–653 (RVSKKINSHTK) are cytoplasmic. The chain crosses the membrane as a helical span at residues 654–674 (IVILLQILLLAMMLAVTNKSV). The Lumenal segment spans residues 675–687 (TSLQQRAGLPTDA). Residues 688–708 (KIAGWVILTLSLSLMPLLHYL) traverse the membrane as a helical segment. The Cytoplasmic portion of the chain corresponds to 709–719 (KPSNDYQVRVL). Residues 720–740 (VIYLTFAPTFLILTISFESFF) traverse the membrane as a helical segment. The Lumenal segment spans residues 741–775 (YLLFTNYLMLWIEIESKIKAQNIAKNSQNWLQLLR). The helical transmembrane segment at 776–796 (ISIIGFFLLQFAFFGTGNVAS) threads the bilayer. The Cytoplasmic segment spans residues 797–818 (ISSFSLDSVYRLMPVFDPFPMG). Residues 819-839 (ALLILKIMIPYILLSTALGIM) form a helical membrane-spanning segment. The Lumenal segment spans residues 840–848 (NLKLNIKDY). Residues 849–869 (TVSSLILSTSDVLSLNFFYLL) form a helical membrane-spanning segment. The Cytoplasmic portion of the chain corresponds to 870–885 (RTEGSWLDIGVTISNY). Residues 886–906 (CLAILSSLFMIVLELFSHFLL) form a helical membrane-spanning segment. Topologically, residues 907-925 (KNVRDNGMDIAASKQQKRH) are lumenal.

This sequence belongs to the PIGG/PIGN/PIGO family. PIGN subfamily.

The protein resides in the endoplasmic reticulum membrane. Its pathway is glycolipid biosynthesis; glycosylphosphatidylinositol-anchor biosynthesis. Functionally, ethanolamine phosphate transferase involved in glycosylphosphatidylinositol-anchor biosynthesis. Transfers ethanolamine phosphate to the first alpha-1,4-linked mannose of the glycosylphosphatidylinositol precursor of GPI-anchor. This chain is GPI ethanolamine phosphate transferase 1 (MCD4), found in Eremothecium gossypii (strain ATCC 10895 / CBS 109.51 / FGSC 9923 / NRRL Y-1056) (Yeast).